Here is a 572-residue protein sequence, read N- to C-terminus: MARILITSALPYINGVKHLGNLAGSMLPADVYARFQRLRGHDVLYVCATDEHGTPAELAADAAGMDVRAYCDEQHDIQKRSGEGFSLSYDYFGRTSNAPNIRLTQHFAQVLEEKGLIAERVEEQVFSIDDDRFLPDRYVEGTCPHCGFERARGDQCDNCGRLLEPTDLKEPYSKISGSKNLEVRETKHLHLVQTQMETKIRDWVDASTEWPSLAKSIAYKWLDEGLRDRSITRDLKWGVPVAQDGTPREGFEGKVFYVWFDAPIGYIGATVEWAEAGGGDWESWWRTDKGADDVTYVQFMGKDNVAFHTVSFPATILGSEEPWKTVDKLKAFNWLTWYGGKFSTSEKRGVFMDQALDILPGDYWRWYLTANAPEGSDAAFTWEHFQGLINSDLANVLGNFVNRITKYTVSKFDGTLPSAGTPGENEAWMAAELDQRLPALVANMEAMEFRKAAAEVRAIWAAGNEYLTKAEPWVKYKSDVDAAAVGVRTGLNLVALFGILAQPFIPEAASKILDALGVPDDRRSWEFDGPASALLDALPHGMAITPPAVLFAKIEDAQVAEWTERFGGAPEA.

Positions 11 to 21 (PYINGVKHLGN) match the 'HIGH' region motif. The Zn(2+) site is built by C143, C146, C156, and C159. A 'KMSKS' region motif is present at residues 341–345 (KFSTS). Residue T344 coordinates ATP.

This sequence belongs to the class-I aminoacyl-tRNA synthetase family. MetG type 1 subfamily. As to quaternary structure, monomer. Zn(2+) serves as cofactor.

The protein resides in the cytoplasm. It catalyses the reaction tRNA(Met) + L-methionine + ATP = L-methionyl-tRNA(Met) + AMP + diphosphate. In terms of biological role, is required not only for elongation of protein synthesis but also for the initiation of all mRNA translation through initiator tRNA(fMet) aminoacylation. The polypeptide is Methionine--tRNA ligase (Maricaulis maris (strain MCS10) (Caulobacter maris)).